The sequence spans 878 residues: Phosphoenolpyruvate carboxylase (878 aa).

Residues H140 and K545 contribute to the active site.

Belongs to the PEPCase type 1 family. The cofactor is Mg(2+).

It catalyses the reaction oxaloacetate + phosphate = phosphoenolpyruvate + hydrogencarbonate. Forms oxaloacetate, a four-carbon dicarboxylic acid source for the tricarboxylic acid cycle. This chain is Phosphoenolpyruvate carboxylase, found in Pseudomonas syringae pv. syringae (strain B728a).